The chain runs to 88 residues: Small ribosomal subunit protein bS20 (88 aa).

It belongs to the bacterial ribosomal protein bS20 family.

Binds directly to 16S ribosomal RNA. The sequence is that of Small ribosomal subunit protein bS20 from Renibacterium salmoninarum (strain ATCC 33209 / DSM 20767 / JCM 11484 / NBRC 15589 / NCIMB 2235).